The chain runs to 562 residues: Probable sesquiterpene synthase (562 aa).

Mg(2+) is bound by residues Asp-315, Asp-319, and Glu-467. The DDXXD motif signature appears at 315 to 319 (DDIYD).

The protein belongs to the terpene synthase family. Tpsa subfamily. Requires Mg(2+) as cofactor. Mn(2+) is required as a cofactor.

In terms of biological role, sesquiterpene synthase. This is Probable sesquiterpene synthase (STPS) from Santalum murrayanum (Bitter quandong).